Reading from the N-terminus, the 121-residue chain is Large ribosomal subunit protein uL14 (121 aa).

This sequence belongs to the universal ribosomal protein uL14 family. In terms of assembly, part of the 50S ribosomal subunit. Forms a cluster with proteins L3 and L19. In the 70S ribosome, L14 and L19 interact and together make contacts with the 16S rRNA in bridges B5 and B8.

In terms of biological role, binds to 23S rRNA. Forms part of two intersubunit bridges in the 70S ribosome. The protein is Large ribosomal subunit protein uL14 of Porphyromonas gingivalis (strain ATCC 33277 / DSM 20709 / CIP 103683 / JCM 12257 / NCTC 11834 / 2561).